Reading from the N-terminus, the 516-residue chain is Endoglucanase 17 (516 aa).

A signal peptide spans methionine 1 to glycine 29. Catalysis depends on aspartate 105, which acts as the Nucleophile. Residues histidine 433, aspartate 484, and glutamate 493 contribute to the active site.

Belongs to the glycosyl hydrolase 9 (cellulase E) family.

It localises to the secreted. The enzyme catalyses Endohydrolysis of (1-&gt;4)-beta-D-glucosidic linkages in cellulose, lichenin and cereal beta-D-glucans.. The polypeptide is Endoglucanase 17 (Arabidopsis thaliana (Mouse-ear cress)).